The following is a 151-amino-acid chain: MPCTPNSHRLLLVTALCLLITSLFAQQKRRPRIDCTRFVFAPACRGVSAKRALDPRAVTLDENVAPSFSDLDDEILRSFLAYNRHKQQEQAAPRPDAPSSLLRLVAQRGLRHRTPHSLHRPVPWSVEQSFLKTGSDGALSWPNSIKSLQED.

The first 25 residues, 1–25, serve as a signal peptide directing secretion; it reads MPCTPNSHRLLLVTALCLLITSLFA.

It is found in the secreted. This chain is Abdominal ganglion neuropeptide L11, found in Aplysia californica (California sea hare).